A 137-amino-acid chain; its full sequence is Large ribosomal subunit protein uL16 (137 aa).

Belongs to the universal ribosomal protein uL16 family. In terms of assembly, part of the 50S ribosomal subunit.

Its function is as follows. Binds 23S rRNA and is also seen to make contacts with the A and possibly P site tRNAs. The polypeptide is Large ribosomal subunit protein uL16 (Agrobacterium fabrum (strain C58 / ATCC 33970) (Agrobacterium tumefaciens (strain C58))).